A 242-amino-acid chain; its full sequence is Small ribosomal subunit protein uS3 (242 aa).

In terms of domain architecture, KH type-2 spans 39-109 (IRQYVEKNLA…QIRINVIEVA (71 aa)). The interval 220–242 (VPAQAPRRQQRRRQQFEDRSSEG) is disordered. Positions 233–242 (QQFEDRSSEG) are enriched in basic and acidic residues.

This sequence belongs to the universal ribosomal protein uS3 family. In terms of assembly, part of the 30S ribosomal subunit. Forms a tight complex with proteins S10 and S14.

Functionally, binds the lower part of the 30S subunit head. Binds mRNA in the 70S ribosome, positioning it for translation. The sequence is that of Small ribosomal subunit protein uS3 from Microcystis aeruginosa (strain NIES-843 / IAM M-2473).